A 195-amino-acid polypeptide reads, in one-letter code: Putative 3-methyladenine DNA glycosylase (195 aa).

Belongs to the DNA glycosylase MPG family.

The polypeptide is Putative 3-methyladenine DNA glycosylase (Synechococcus sp. (strain JA-3-3Ab) (Cyanobacteria bacterium Yellowstone A-Prime)).